Here is a 484-residue protein sequence, read N- to C-terminus: Probable D-lactate dehydrogenase, mitochondrial (484 aa).

Residues 1-52 constitute a mitochondrion transit peptide; sequence MAMLLRVATQRLSPWRSFCSRGSQGGLSQDFVEALKAVVGSPHVSTASAVRE. N6-acetyllysine is present on Lys36. The 181-residue stretch at 62–242 folds into the FAD-binding PCMH-type domain; it reads RCQPPDAVVW…TSTTLRLHPA (181 aa). The residue at position 292 (Lys292) is an N6-acetyllysine. Lys335 carries the N6-acetyllysine; alternate modification. Lys335 is subject to N6-succinyllysine; alternate. N6-acetyllysine occurs at positions 422 and 449.

The protein belongs to the FAD-binding oxidoreductase/transferase type 4 family. Interacts with CSRP3. FAD is required as a cofactor. In terms of tissue distribution, readily detected in liver and kidney, with a weaker signal observed in heart, skeletal muscle, stomach, brain, and lung.

It is found in the mitochondrion. The enzyme catalyses (R)-lactate + 2 Fe(III)-[cytochrome c] = 2 Fe(II)-[cytochrome c] + pyruvate + 2 H(+). Its function is as follows. Involved in D-lactate, but not L-lactate catabolic process. The polypeptide is Probable D-lactate dehydrogenase, mitochondrial (Mus musculus (Mouse)).